A 395-amino-acid chain; its full sequence is Acid ceramidase (395 aa).

The first 21 residues, 1–21 (MLGRSRLTFVLLAAAVTCAEA), serve as a signal peptide directing secretion. Cys31 and Cys340 form a disulfide bridge. Catalysis depends on Cys143, which acts as the Nucleophile. Asn173, Asn259, Asn286, and Asn348 each carry an N-linked (GlcNAc...) asparagine glycan. Residues Cys388 and Cys392 are joined by a disulfide bond.

This sequence belongs to the acid ceramidase family. As to quaternary structure, heterodimer; disulfide-linked. The heterodimer is composed of the disulfide-linked alpha and beta chains produced by autocatalytic cleavage of the precursor. N-glycosylated. In terms of processing, proteolytically cleaved into two chains alpha and beta that remain associated via a disulfide bond. Cleavage gives rise to a conformation change that activates the enzyme. The same catalytic Cys residue mediates the autoproteolytic cleavage and subsequent hydrolysis of lipid substrates. The beta chain may undergo an additional C-terminal processing.

The protein resides in the lysosome. It localises to the secreted. It carries out the reaction an N-acylsphing-4-enine + H2O = sphing-4-enine + a fatty acid. It catalyses the reaction N-dodecanoylsphing-4-enine + H2O = dodecanoate + sphing-4-enine. The enzyme catalyses N-tetradecanoylsphing-4-enine + H2O = tetradecanoate + sphing-4-enine. The catalysed reaction is N-hexadecanoylsphing-4-enine + H2O = sphing-4-enine + hexadecanoate. It carries out the reaction N-octadecanoylsphing-4-enine + H2O = sphing-4-enine + octadecanoate. It catalyses the reaction N-dodecanoyl-(4R)-hydroxysphinganine + H2O = (4R)-hydroxysphinganine + dodecanoate. The enzyme catalyses N-(dodecanoyl)-sphinganine + H2O = dodecanoate + sphinganine. The catalysed reaction is N-(acetyl)-sphing-4-enine + H2O = sphing-4-enine + acetate. It carries out the reaction N-(hexanoyl)sphing-4-enine + H2O = hexanoate + sphing-4-enine. It catalyses the reaction N-octanoylsphing-4-enine + H2O = octanoate + sphing-4-enine. The enzyme catalyses N-(9Z-octadecenoyl)-sphing-4-enine + H2O = sphing-4-enine + (9Z)-octadecenoate. The catalysed reaction is N-dodecanoylethanolamine + H2O = dodecanoate + ethanolamine. It participates in lipid metabolism; sphingolipid metabolism. Functionally, lysosomal ceramidase that hydrolyzes sphingolipid ceramides into sphingosine and free fatty acids at acidic pH. Ceramides, sphingosine, and its phosphorylated form sphingosine-1-phosphate are bioactive lipids that mediate cellular signaling pathways regulating several biological processes including cell proliferation, apoptosis and differentiation. Has a higher catalytic efficiency towards C12-ceramides versus other ceramides. Also catalyzes the reverse reaction allowing the synthesis of ceramides from fatty acids and sphingosine. For the reverse synthetic reaction, the natural sphingosine D-erythro isomer is more efficiently utilized as a substrate compared to D-erythro-dihydrosphingosine and D-erythro-phytosphingosine, while the fatty acids with chain lengths of 12 or 14 carbons are the most efficiently used. Also has an N-acylethanolamine hydrolase activity. By regulating the levels of ceramides, sphingosine and sphingosine-1-phosphate in the epidermis, mediates the calcium-induced differentiation of epidermal keratinocytes. Also indirectly regulates tumor necrosis factor/TNF-induced apoptosis. By regulating the intracellular balance between ceramides and sphingosine, in adrenocortical cells, probably also acts as a regulator of steroidogenesis. This chain is Acid ceramidase, found in Heterocephalus glaber (Naked mole rat).